Consider the following 207-residue polypeptide: MPIRKVSLLRLIPLASLVLAACTTTKPTGPATSPTSPQWRAHEQAVQQLSQYQTRGSFAYLSDQKKVYARFFWQQYSPDRYRLLLTNPLGSTELDLNVQKNVVQLTDNQGKRYVSDNAEEMIRKLTGMAIPLDNLRQWMLGLPGEASDFKLDDQYRLNSLTYQQGSQTWTVDYQDYNNSLKPQLPSRLELKQGDQRIKLKMDDWTLK.

Residues 1 to 21 (MPIRKVSLLRLIPLASLVLAA) form the signal peptide. Cysteine 22 carries the N-palmitoyl cysteine lipid modification. Cysteine 22 carries S-diacylglycerol cysteine lipidation.

The protein belongs to the LolB family. In terms of assembly, monomer.

The protein resides in the cell outer membrane. Functionally, plays a critical role in the incorporation of lipoproteins in the outer membrane after they are released by the LolA protein. The protein is Outer-membrane lipoprotein LolB of Serratia proteamaculans (strain 568).